The sequence spans 100 residues: Ferredoxin-2 (100 aa).

Residues 4–97 (YKVTLINEEE…DCTIMTHQES (94 aa)) form the 2Fe-2S ferredoxin-type domain. The [2Fe-2S] cluster site is built by C42, C47, C50, and C81.

The protein belongs to the 2Fe2S plant-type ferredoxin family. [2Fe-2S] cluster serves as cofactor.

Functionally, ferredoxins are iron-sulfur proteins that transfer electrons in a wide variety of metabolic reactions. This is Ferredoxin-2 from Aphanothece sacrum.